We begin with the raw amino-acid sequence, 86 residues long: Parvalbumin beta 3 (86 aa).

Position 1 is an N-acetylalanine (A1). An EF-hand domain is found at 35-70; the sequence is LSPEEVKKFFAIIDQDHSGFIEEEELKLFLQTFSAG. D48, D50, S52, F54, E56, and E59 together coordinate Ca(2+).

It belongs to the parvalbumin family.

Functionally, in muscle, parvalbumin is thought to be involved in relaxation after contraction. It binds two calcium ions. This chain is Parvalbumin beta 3, found in Merluccius hubbsi (Argentine hake).